Reading from the N-terminus, the 195-residue chain is Large ribosomal subunit protein uL5 (195 aa).

Belongs to the universal ribosomal protein uL5 family. As to quaternary structure, part of the 50S ribosomal subunit; part of the 5S rRNA/L5/L18/L25 subcomplex. Contacts the 5S rRNA and the P site tRNA. Forms a bridge to the 30S subunit in the 70S ribosome.

In terms of biological role, this is one of the proteins that bind and probably mediate the attachment of the 5S RNA into the large ribosomal subunit, where it forms part of the central protuberance. In the 70S ribosome it contacts protein S13 of the 30S subunit (bridge B1b), connecting the 2 subunits; this bridge is implicated in subunit movement. Contacts the P site tRNA; the 5S rRNA and some of its associated proteins might help stabilize positioning of ribosome-bound tRNAs. The polypeptide is Large ribosomal subunit protein uL5 (Leifsonia xyli subsp. xyli (strain CTCB07)).